The chain runs to 416 residues: N-acetyl-L-cysteine deacetylase (416 aa).

The Zn(2+) site is built by cysteine 128, histidine 130, glutamate 164, histidine 188, and histidine 380.

Belongs to the peptidase M20 family. Requires Zn(2+) as cofactor. Co(2+) is required as a cofactor.

It catalyses the reaction N-acetyl-L-cysteine + H2O = L-cysteine + acetate. The protein operates within amino-acid metabolism. Its function is as follows. Involved in a cysteine salvage pathway from S-alkylcysteine. Catalyzes the last step in this pathway, i.e. the deacetylation of N-acetyl-L-cysteine. This pathway is likely important in the catabolism of alkylated cysteine generated by proteolysis of alkylated glutathione formed in the detoxification of a wide range of electrophiles. This chain is N-acetyl-L-cysteine deacetylase, found in Bacillus subtilis (strain 168).